Here is a 43-residue protein sequence, read N- to C-terminus: Protein PsbN (43 aa).

Residues 4 to 24 form a helical membrane-spanning segment; the sequence is ATFVAIFISCLLISFTGYALY.

The protein belongs to the PsbN family.

The protein localises to the plastid. Its subcellular location is the chloroplast thylakoid membrane. May play a role in photosystem I and II biogenesis. This is Protein PsbN from Marchantia polymorpha (Common liverwort).